Consider the following 104-residue polypeptide: MVPVAYYLVLSAILFSIGVGAFLIKRNIITIFMSIELMLNAVNLSFVAFANYWRQINHQFSGQIFVFFVMVVAAAEAAVGLAIIIALFRSRSTLNVDQVDLMKL.

The next 3 helical transmembrane spans lie at 4–24, 28–48, and 64–84; these read VAYYLVLSAILFSIGVGAFLI, IITIFMSIELMLNAVNLSFVA, and IFVFFVMVVAAAEAAVGLAII.

This sequence belongs to the complex I subunit 4L family. NDH-1 is composed of 14 different subunits. Subunits NuoA, H, J, K, L, M, N constitute the membrane sector of the complex.

It is found in the cell inner membrane. The enzyme catalyses a quinone + NADH + 5 H(+)(in) = a quinol + NAD(+) + 4 H(+)(out). Its function is as follows. NDH-1 shuttles electrons from NADH, via FMN and iron-sulfur (Fe-S) centers, to quinones in the respiratory chain. The immediate electron acceptor for the enzyme in this species is believed to be ubiquinone. Couples the redox reaction to proton translocation (for every two electrons transferred, four hydrogen ions are translocated across the cytoplasmic membrane), and thus conserves the redox energy in a proton gradient. The polypeptide is NADH-quinone oxidoreductase subunit K (Acidobacterium capsulatum (strain ATCC 51196 / DSM 11244 / BCRC 80197 / JCM 7670 / NBRC 15755 / NCIMB 13165 / 161)).